Consider the following 228-residue polypeptide: tRNA (guanine-N(1)-)-methyltransferase (228 aa).

S-adenosyl-L-methionine contacts are provided by residues G111 and 130 to 135 (IGDFVL).

It belongs to the RNA methyltransferase TrmD family. Homodimer.

Its subcellular location is the cytoplasm. The catalysed reaction is guanosine(37) in tRNA + S-adenosyl-L-methionine = N(1)-methylguanosine(37) in tRNA + S-adenosyl-L-homocysteine + H(+). Its function is as follows. Specifically methylates guanosine-37 in various tRNAs. The chain is tRNA (guanine-N(1)-)-methyltransferase from Ureaplasma urealyticum serovar 10 (strain ATCC 33699 / Western).